Here is a 300-residue protein sequence, read N- to C-terminus: Ribosomal protein L11 methyltransferase (300 aa).

The S-adenosyl-L-methionine site is built by threonine 152, glycine 173, aspartate 195, and asparagine 234.

It belongs to the methyltransferase superfamily. PrmA family.

Its subcellular location is the cytoplasm. It catalyses the reaction L-lysyl-[protein] + 3 S-adenosyl-L-methionine = N(6),N(6),N(6)-trimethyl-L-lysyl-[protein] + 3 S-adenosyl-L-homocysteine + 3 H(+). Methylates ribosomal protein L11. This is Ribosomal protein L11 methyltransferase from Burkholderia cenocepacia (strain ATCC BAA-245 / DSM 16553 / LMG 16656 / NCTC 13227 / J2315 / CF5610) (Burkholderia cepacia (strain J2315)).